The sequence spans 362 residues: uncharacterized protein (362 aa).

Ala-2 carries the N-acetylalanine modification.

The protein belongs to the Gfo/Idh/MocA family. As to quaternary structure, homodimer.

This is an uncharacterized protein from Arabidopsis thaliana (Mouse-ear cress).